Consider the following 73-residue polypeptide: Small ribosomal subunit protein bS18 (73 aa).

It belongs to the bacterial ribosomal protein bS18 family. Part of the 30S ribosomal subunit. Forms a tight heterodimer with protein bS6.

In terms of biological role, binds as a heterodimer with protein bS6 to the central domain of the 16S rRNA, where it helps stabilize the platform of the 30S subunit. The polypeptide is Small ribosomal subunit protein bS18 (Synechococcus sp. (strain WH7803)).